Reading from the N-terminus, the 448-residue chain is Phosphoglucosamine mutase (448 aa).

S100 functions as the Phosphoserine intermediate in the catalytic mechanism. S100, D240, D242, and D244 together coordinate Mg(2+). S100 is subject to Phosphoserine.

It belongs to the phosphohexose mutase family. The cofactor is Mg(2+). In terms of processing, activated by phosphorylation.

The catalysed reaction is alpha-D-glucosamine 1-phosphate = D-glucosamine 6-phosphate. Functionally, catalyzes the conversion of glucosamine-6-phosphate to glucosamine-1-phosphate. The protein is Phosphoglucosamine mutase of Clostridium tetani (strain Massachusetts / E88).